The primary structure comprises 378 residues: MSTPRIVLGVSGGVDSSVAAWKLAQQGEPIAGLFMQNWADDGSGDCRAEDDRRDAVAVCGVLGIPFHFRDFSGEYWNGVFAHFLAEYAAGRTPNPDVLCNREVKFKHFLDAAQALGAERIATGHYAQVAHRGGRWRLLRGADRGKDQSYFLHQLGQAQLAATLFPIGDLEKSTLRRIAQDAGLPTHAKKDSTGICFIGERDFREFLGRYLPARAGEIRDPQGQRIAEHPGVFYFTLGQREGLNIGGVRGRAAAPWYVVGKDVANNVLYVDQDRDSPLLQSRWLQSEQAHWVTGAPPARRFTCTAQTRYRQPDEPCTVDVQDDGSVQVRFERPQRAVTPGQSLVLYDGEECLGGAVIAATDAPLERQLAGSSFSSEVVA.

Residues 9–16 (GVSGGVDS) and M35 each bind ATP. The tract at residues 94 to 96 (NPD) is interaction with target base in tRNA. Residue C99 is the Nucleophile of the active site. C99 and C195 form a disulfide bridge. G123 contributes to the ATP binding site. Residues 145-147 (KDQ) form an interaction with tRNA region. Catalysis depends on C195, which acts as the Cysteine persulfide intermediate. The tract at residues 307–308 (RY) is interaction with tRNA.

The protein belongs to the MnmA/TRMU family.

Its subcellular location is the cytoplasm. The enzyme catalyses S-sulfanyl-L-cysteinyl-[protein] + uridine(34) in tRNA + AH2 + ATP = 2-thiouridine(34) in tRNA + L-cysteinyl-[protein] + A + AMP + diphosphate + H(+). Catalyzes the 2-thiolation of uridine at the wobble position (U34) of tRNA, leading to the formation of s(2)U34. This Xanthomonas euvesicatoria pv. vesicatoria (strain 85-10) (Xanthomonas campestris pv. vesicatoria) protein is tRNA-specific 2-thiouridylase MnmA.